A 104-amino-acid polypeptide reads, in one-letter code: Large ribosomal subunit protein uL24 (104 aa).

This sequence belongs to the universal ribosomal protein uL24 family. As to quaternary structure, part of the 50S ribosomal subunit.

Functionally, one of two assembly initiator proteins, it binds directly to the 5'-end of the 23S rRNA, where it nucleates assembly of the 50S subunit. In terms of biological role, one of the proteins that surrounds the polypeptide exit tunnel on the outside of the subunit. In Dichelobacter nodosus (strain VCS1703A), this protein is Large ribosomal subunit protein uL24.